We begin with the raw amino-acid sequence, 342 residues long: Cytoplasmic tRNA 2-thiolation protein 1 (342 aa).

Belongs to the TtcA family. CTU1/NCS6/ATPBD3 subfamily.

The protein resides in the cytoplasm. The protein operates within tRNA modification; 5-methoxycarbonylmethyl-2-thiouridine-tRNA biosynthesis. Plays a central role in 2-thiolation of mcm(5)S(2)U at tRNA wobble positions of tRNA(Lys), tRNA(Glu) and tRNA(Gln). Directly binds tRNAs and probably acts by catalyzing adenylation of tRNAs, an intermediate required for 2-thiolation. It is unclear whether it acts as a sulfurtransferase that transfers sulfur from thiocarboxylated URM1 onto the uridine of tRNAs at wobble position. The polypeptide is Cytoplasmic tRNA 2-thiolation protein 1 (Anopheles gambiae (African malaria mosquito)).